The primary structure comprises 210 residues: MITIFEALERVRVIPVVTLERVEDAVPLARALITGGIRCMEVTFRTLVAAEAIAAIRQECADVLLGAGTVLTVEQAQQAQAAGAQFVVSPGFNPRVVAHCLGHGVPIIPGIASATEIERALEFGISVVKFFPAELLGGTAMMSALARPYTAVRFVPTGGIHLNNLAEYVAHPRVLACGGSWMVPAQSIAAGDFSQVTALSQQTLQIVGVM.

E41 (proton acceptor) is an active-site residue. R45, T69, and K129 together coordinate pyruvate. The active-site Schiff-base intermediate with substrate is the K129.

Belongs to the KHG/KDPG aldolase family. As to quaternary structure, homotrimer.

It localises to the cytoplasm. The catalysed reaction is 2-dehydro-3-deoxy-6-phospho-D-gluconate = D-glyceraldehyde 3-phosphate + pyruvate. It participates in carbohydrate acid metabolism; 2-dehydro-3-deoxy-D-gluconate degradation; D-glyceraldehyde 3-phosphate and pyruvate from 2-dehydro-3-deoxy-D-gluconate: step 2/2. Its function is as follows. Catalyzes the reversible, stereospecific retro-aldol cleavage of 2-keto-3-deoxy-6-phosphogluconate (KDPG) to pyruvate and D-glyceraldehyde-3-phosphate. This Treponema pallidum (strain Nichols) protein is 2-dehydro-3-deoxy-phosphogluconate aldolase (eda).